The chain runs to 191 residues: Ankyrin repeat domain-containing protein 22 (191 aa).

ANK repeat units lie at residues 39 to 68, 72 to 100, 101 to 130, and 134 to 163; these read NGDTPLICACRRGHLRIVSFLLRRNADVNL, KERTCLHYAVKKRFTFFDYLLIILLMPVL, LIGYFLMVSKTKQNETLVRMLLNAGVEVNA, and DGYTALHYACQMKNQTLIPLLLEAHADPMI.

In Mus musculus (Mouse), this protein is Ankyrin repeat domain-containing protein 22 (Ankrd22).